The primary structure comprises 192 residues: MAGLRLIVGLGNPGSEHARTRHNAGFHFVEALAEKAGARWNVDSKLFGETAKVEIAGQTVWLLKPATFMNLSGKSVTAAQRFWKIEPEETLLAHDELDLAPGVARLKFDGGHGGQNGLRDTIRLLGHGKFHRLRVGIGHPGHKDRVVGWVLGRPSKEDDVLIARAIDDAIDVMPLAVQGDFSEAMKRLHTPK.

TRNA is bound at residue His-17. His-22 functions as the Proton acceptor in the catalytic mechanism. TRNA is bound by residues Phe-68, Asn-70, and Asn-116.

Belongs to the PTH family. As to quaternary structure, monomer.

Its subcellular location is the cytoplasm. The catalysed reaction is an N-acyl-L-alpha-aminoacyl-tRNA + H2O = an N-acyl-L-amino acid + a tRNA + H(+). Hydrolyzes ribosome-free peptidyl-tRNAs (with 1 or more amino acids incorporated), which drop off the ribosome during protein synthesis, or as a result of ribosome stalling. Functionally, catalyzes the release of premature peptidyl moieties from peptidyl-tRNA molecules trapped in stalled 50S ribosomal subunits, and thus maintains levels of free tRNAs and 50S ribosomes. The protein is Peptidyl-tRNA hydrolase of Stenotrophomonas maltophilia (strain K279a).